The primary structure comprises 103 residues: Large ribosomal subunit protein bL21 (103 aa).

The protein belongs to the bacterial ribosomal protein bL21 family. Part of the 50S ribosomal subunit. Contacts protein L20.

In terms of biological role, this protein binds to 23S rRNA in the presence of protein L20. The sequence is that of Large ribosomal subunit protein bL21 from Aeromonas salmonicida (strain A449).